The primary structure comprises 1201 residues: Potassium channel subfamily T member 1 (1201 aa).

The disordered stretch occupies residues 1-28 (MARAKLKNSPSESNSHVKTVPPATTEDV). Topologically, residues 1 to 92 (MARAKLKNSP…FFIKNQRSSL (92 aa)) are cytoplasmic. Residues 8-17 (NSPSESNSHV) are compositionally biased toward polar residues. The helical transmembrane segment at 93-115 (RIRLFNFSLKLLTCLLYIVRVLL) threads the bilayer. Topologically, residues 116–152 (DNPEEGIGCWECEKQNYTLFNQSTKINWSHIFWVDRK) are extracellular. 2 N-linked (GlcNAc...) asparagine glycosylation sites follow: asparagine 131 and asparagine 136. The chain crosses the membrane as a helical span at residues 153 to 175 (LPLWAVQVSIALISFLETMLLIY). Topologically, residues 176–184 (LSYKGNIWE) are cytoplasmic. A helical transmembrane segment spans residues 185–206 (QIFRISFILEMINTVPFIITIF). The Extracellular segment spans residues 207–216 (WPPLRNLFIP). The chain crosses the membrane as a helical span at residues 217–229 (VFLNCWLAKYALE). Residues 230-249 (NMINDLHRAIQRTQSAMFNQ) lie on the Cytoplasmic side of the membrane. The helical transmembrane segment at 250-272 (VLILICTLLCLVFTGTCGIQHLE) threads the bilayer. At 273–279 (RAGEKLS) the chain is on the extracellular side. An intramembrane region (pore-forming) is located at residues 280–300 (LFKSFYFCIVTFSTVGYGDVT). K(+)-binding residues include valine 294 and glycine 295. Residues 301–304 (PKIW) are Extracellular-facing. The chain crosses the membrane as a helical span at residues 305-326 (PSQLLVVIMICVALVVLPLQFE). Residues 327-1201 (ELVYLWMERQ…NPETRDETQL (875 aa)) lie on the Cytoplasmic side of the membrane. The RCK N-terminal 1 domain maps to 350–486 (EKHVVLCVSS…FHVKFADHVV (137 aa)). The Na(+) site is built by leucine 511, histidine 514, serine 536, and asparagine 538. The Zn(2+) site is built by cysteine 750 and cysteine 751. Arginine 753 and lysine 756 together coordinate K(+). Positions 753 and 756 each coordinate Na(+). Residues cysteine 758 and histidine 760 each contribute to the Zn(2+) site. Positions 761, 769, and 770 each coordinate K(+). Phenylalanine 771 is a binding site for Na(+). In terms of domain architecture, RCK N-terminal 2 spans 773–913 (NKLIIVSAET…QFRAKDSYSL (141 aa)). Residues serine 779, leucine 810, aspartate 812, glycine 834, and aspartate 857 each coordinate K(+). Residues 1175-1201 (NDGHSRKSSCSNKLGPCNPETRDETQL) are disordered.

Belongs to the potassium channel family. Calcium-activated (TC 1.A.1.3) subfamily. KCa4.1/KCNT1 sub-subfamily. In terms of assembly, homotetramer; which constitutes the Na(+)-activated K(+) channel. Interacts with KCNT2; these heterodimer channels differ from the homomers in their unitary conductance, kinetic behavior, subcellular localization, and response to activation of protein kinase C. In terms of processing, phosphorylated by protein kinase C. Phosphorylation of the C-terminal domain increases channel activity.

The protein resides in the cell membrane. The catalysed reaction is K(+)(in) = K(+)(out). Its activity is regulated as follows. Activated by high intracellular Na(+). In addition to activation by Na(+), is cooperatively activated by intracellular Cl(-) levels. Inhibited by Zn(2+). Activated upon stimulation of G-protein coupled receptors, such as CHRM1 and GRIA1. Its function is as follows. Sodium-activated K(+) channel. Acts as an important mediator of neuronal membrane excitability. Contributes to the delayed outward currents. Regulates of neuronal bursting in sensory neurons. Contributes to synaptic development and plasticity. This Gallus gallus (Chicken) protein is Potassium channel subfamily T member 1 (KCNT1).